The following is a 425-amino-acid chain: Apolipoprotein N-acyltransferase (425 aa).

The next 6 helical transmembrane spans lie at 12 to 32 (LLAC…AYAI), 34 to 54 (NPYI…LAFL), 60 to 80 (SAFA…ALSF), 88 to 108 (LLPL…YLLL), 120 to 140 (FLGS…DSFF), and 142 to 162 (YSVF…CIFL). A CN hydrolase domain is found at 201–425 (VSTKTPQDLK…LGDILFRKRS (225 aa)). Glu242 serves as the catalytic Proton acceptor. Lys296 is an active-site residue. Cys349 serves as the catalytic Nucleophile.

The protein belongs to the CN hydrolase family. Apolipoprotein N-acyltransferase subfamily.

Its subcellular location is the cell inner membrane. It carries out the reaction N-terminal S-1,2-diacyl-sn-glyceryl-L-cysteinyl-[lipoprotein] + a glycerophospholipid = N-acyl-S-1,2-diacyl-sn-glyceryl-L-cysteinyl-[lipoprotein] + a 2-acyl-sn-glycero-3-phospholipid + H(+). The protein operates within protein modification; lipoprotein biosynthesis (N-acyl transfer). In terms of biological role, catalyzes the phospholipid dependent N-acylation of the N-terminal cysteine of apolipoprotein, the last step in lipoprotein maturation. This Helicobacter pylori (strain ATCC 700392 / 26695) (Campylobacter pylori) protein is Apolipoprotein N-acyltransferase.